We begin with the raw amino-acid sequence, 245 residues long: tRNA pseudouridine synthase A (245 aa).

The active-site Nucleophile is Asp52. Tyr111 lines the substrate pocket.

Belongs to the tRNA pseudouridine synthase TruA family. Homodimer.

The catalysed reaction is uridine(38/39/40) in tRNA = pseudouridine(38/39/40) in tRNA. Formation of pseudouridine at positions 38, 39 and 40 in the anticodon stem and loop of transfer RNAs. This Nitrobacter hamburgensis (strain DSM 10229 / NCIMB 13809 / X14) protein is tRNA pseudouridine synthase A.